Reading from the N-terminus, the 544-residue chain is Putative cysteine ligase BshC (544 aa).

Residues 431–463 (LNDTCRTIKEEHEKFIQELSRLDEKIYDFEEKN) adopt a coiled-coil conformation.

The protein belongs to the BshC family.

Its function is as follows. Involved in bacillithiol (BSH) biosynthesis. May catalyze the last step of the pathway, the addition of cysteine to glucosamine malate (GlcN-Mal) to generate BSH. The sequence is that of Putative cysteine ligase BshC from Natranaerobius thermophilus (strain ATCC BAA-1301 / DSM 18059 / JW/NM-WN-LF).